Reading from the N-terminus, the 303-residue chain is Oxygen-dependent coproporphyrinogen-III oxidase (303 aa).

Residue serine 93 participates in substrate binding. A divalent metal cation is bound by residues histidine 97 and histidine 107. The Proton donor role is filled by histidine 107. Residue 109–111 (NVR) participates in substrate binding. Histidine 146 and histidine 176 together coordinate a divalent metal cation. The important for dimerization stretch occupies residues 241–276 (YVEFNLVYDRGTLFGLQSGGRTESILMSLPPQVRWG). 259-261 (GGR) is a substrate binding site.

It belongs to the aerobic coproporphyrinogen-III oxidase family. As to quaternary structure, homodimer. The cofactor is a divalent metal cation.

The protein resides in the cytoplasm. The catalysed reaction is coproporphyrinogen III + O2 + 2 H(+) = protoporphyrinogen IX + 2 CO2 + 2 H2O. Its pathway is porphyrin-containing compound metabolism; protoporphyrin-IX biosynthesis; protoporphyrinogen-IX from coproporphyrinogen-III (O2 route): step 1/1. In terms of biological role, involved in the heme biosynthesis. Catalyzes the aerobic oxidative decarboxylation of propionate groups of rings A and B of coproporphyrinogen-III to yield the vinyl groups in protoporphyrinogen-IX. This Pseudomonas putida (strain GB-1) protein is Oxygen-dependent coproporphyrinogen-III oxidase.